We begin with the raw amino-acid sequence, 303 residues long: MYYGFDIGGTKIALGVFDSGRQLQWEKRVPTPRDSYDAFLDAVCELVAEADQRFGCRGSVGIGIPGMPETEDGTLYAANVPAASGKPLRADLSARLDRDVRLDNDANCFALSEAWDDEFTQYPLVMGLILGTGVGGGLIFNGKPITGKSYITGEFGHMRLPVDALTMMGLDFPLRRCGCGQHGCIENYLSGRGFAWLYQHYYHQQLQAPEIIALYNQGDEQARAHVERYLDLLAVSLGNILTIVDPDLVVIGGGLSNFPAITTQLADRLPCHLLPVARVPRIERARHGDAGGMRGAAFLHLTD.

ATP-binding positions include Gly4–Lys11 and Gly133–Phe140. Zn(2+) contacts are provided by His157, Cys177, Cys179, and Cys184.

It belongs to the ROK (NagC/XylR) family. NagK subfamily.

The catalysed reaction is N-acetyl-D-glucosamine + ATP = N-acetyl-D-glucosamine 6-phosphate + ADP + H(+). Its pathway is cell wall biogenesis; peptidoglycan recycling. Functionally, catalyzes the phosphorylation of N-acetyl-D-glucosamine (GlcNAc) derived from cell-wall degradation, yielding GlcNAc-6-P. In Shigella boydii serotype 4 (strain Sb227), this protein is N-acetyl-D-glucosamine kinase.